A 350-amino-acid chain; its full sequence is UDP-N-acetylenolpyruvoylglucosamine reductase (350 aa).

Residues 24–195 (HVDATARWLL…VAVEFNLPLL (172 aa)) enclose the FAD-binding PCMH-type domain. The active site involves Arg-172. Catalysis depends on Ser-245, which acts as the Proton donor. The active site involves Glu-342.

The protein belongs to the MurB family. FAD serves as cofactor.

The protein resides in the cytoplasm. The enzyme catalyses UDP-N-acetyl-alpha-D-muramate + NADP(+) = UDP-N-acetyl-3-O-(1-carboxyvinyl)-alpha-D-glucosamine + NADPH + H(+). It functions in the pathway cell wall biogenesis; peptidoglycan biosynthesis. Its function is as follows. Cell wall formation. In Xanthomonas campestris pv. campestris (strain B100), this protein is UDP-N-acetylenolpyruvoylglucosamine reductase.